An 894-amino-acid polypeptide reads, in one-letter code: E3 ubiquitin-protein ligase SH3RF1 (894 aa).

The RING-type zinc finger occupies 12-53; the sequence is CPVCLERLDASAKVLPCQHTFCKRCLLGIVGSRNELRCPECR. 2 SH3 domains span residues 134–193 and 196–259; these read PQLP…IIKP and QPPP…FNSA. The interval 274–323 is disordered; it reads VDTAECPSATAAQSSSASKHSDTKKNTRKRHSFTSLTMANKSSQASQNRH. The segment covering 281 to 291 has biased composition (low complexity); sequence SATAAQSSSAS. Positions 293–363 are interaction with RAC1; the sequence is HSDTKKNTRK…APSQVHISTT (71 aa). At Ser-305 the chain carries Phosphoserine. Residues 306 to 322 show a composition bias toward polar residues; it reads FTSLTMANKSSQASQNR. The tract at residues 448-551 is interaction with AKT2; the sequence is HLRPQTRPSV…STAGGPAQKP (104 aa). The SH3 3 domain maps to 453-514; the sequence is TRPSVYVAIY…PGNYVAPVTR (62 aa). Disordered stretches follow at residues 526-556 and 682-751; these read MSTA…GNGV and LETE…PTLD. Ser-540 is subject to Phosphoserine. Positions 700–713 are enriched in polar residues; that stretch reads SPESAASACGNSSA. Positions 715-726 are enriched in basic and acidic residues; sequence KPDKDSKKEKKG. Ser-743 is modified (phosphoserine). The SH3 4 domain occupies 835–894; sequence VVCERHRVVVSYPPQSEAELELKEGDIVFVHKKREDGWFKGTLQRNGKTGLFPGSFVENI.

Belongs to the SH3RF family. As to quaternary structure, interacts with HERP1. Interacts with RAC1; in a GTP-dependent manner. Interacts with MAP3K10/MLK2 and MAP3K11/MLK3. Interacts with MAPK8IP; this interaction leads to the PJAC complex (POSH-JIP or SH3RF1/MAPK8IP apoptotic complex) with a 1:1 ratio. Interacts with SIAH1. Probably part of a signaling complex that may contain SH3RF1, MAPK8IP, DLK1, MAP2K4/MKK4, MAP2K7/MKK7, MAPK8/JNK1, MAPK9/JNK2, AKT1 and AKT2. Found in a complex with RAC2, MAP3K7/TAK1, MAP2K7/MKK7, MAPK8IP1/JIP1, MAPK8/JNK1 and MAPK9/JNK2. Found in a complex with RAC1, MAP3K11/MLK3, MAP2K7/MKK7, MAPK8IP1/JIP1 and MAPK8/JNK1. Interacts with SH3RF2. Phosphorylated at Ser-305 by AKT1 and AKT2. When phosphorylated, it has reduced ability to bind Rac. In terms of processing, autoubiquitinated. Ubiquitinated by SH3RF2, leading to proteasome-mediated degradation.

The protein resides in the cytoplasm. It localises to the perinuclear region. It is found in the cell projection. Its subcellular location is the lamellipodium. The protein localises to the golgi apparatus. The protein resides in the trans-Golgi network. It catalyses the reaction S-ubiquitinyl-[E2 ubiquitin-conjugating enzyme]-L-cysteine + [acceptor protein]-L-lysine = [E2 ubiquitin-conjugating enzyme]-L-cysteine + N(6)-ubiquitinyl-[acceptor protein]-L-lysine.. Its pathway is protein modification; protein ubiquitination. In terms of biological role, has E3 ubiquitin-protein ligase activity. In the absence of an external substrate, it can catalyze self-ubiquitination. Stimulates ubiquitination of potassium channel KCNJ1, enhancing it's dynamin-dependent and clathrin-independent endocytosis. Acts as a scaffold protein that coordinates with MAPK8IP1/JIP1 in organizing different components of the JNK pathway, including RAC1 or RAC2, MAP3K11/MLK3 or MAP3K7/TAK1, MAP2K7/MKK7, MAPK8/JNK1 and/or MAPK9/JNK2 into a functional multiprotein complex to ensure the effective activation of the JNK signaling pathway. Regulates the differentiation of CD4(+) and CD8(+) T-cells and promotes T-helper 1 (Th1) cell differentiation. Regulates the activation of MAPK8/JNK1 and MAPK9/JNK2 in CD4(+) T-cells and the activation of MAPK8/JNK1 in CD8(+) T-cells. Plays a crucial role in the migration of neocortical neurons in the developing brain. Controls proper cortical neuronal migration and the formation of proximal cytoplasmic dilation in the leading process (PCDLP) in migratory neocortical neurons by regulating the proper localization of activated RAC1 and F-actin assembly. The sequence is that of E3 ubiquitin-protein ligase SH3RF1 (Sh3rf1) from Rattus norvegicus (Rat).